Here is a 294-residue protein sequence, read N- to C-terminus: ATP synthase gamma chain (294 aa).

This sequence belongs to the ATPase gamma chain family. F-type ATPases have 2 components, CF(1) - the catalytic core - and CF(0) - the membrane proton channel. CF(1) has five subunits: alpha(3), beta(3), gamma(1), delta(1), epsilon(1). CF(0) has three main subunits: a, b and c.

It is found in the cell inner membrane. In terms of biological role, produces ATP from ADP in the presence of a proton gradient across the membrane. The gamma chain is believed to be important in regulating ATPase activity and the flow of protons through the CF(0) complex. This Campylobacter jejuni (strain RM1221) protein is ATP synthase gamma chain.